Consider the following 143-residue polypeptide: Fluoride-specific ion channel FluC (143 aa).

The next 4 helical transmembrane spans lie at 6 to 26, 38 to 58, 70 to 90, and 103 to 123; these read CILV…VSVL, TILI…LTLA, LFVM…SLQT, and MVNV…GHVV. G78 and T81 together coordinate Na(+).

It belongs to the fluoride channel Fluc/FEX (TC 1.A.43) family.

It localises to the cell inner membrane. It carries out the reaction fluoride(in) = fluoride(out). Na(+) is not transported, but it plays an essential structural role and its presence is essential for fluoride channel function. Functionally, fluoride-specific ion channel. Important for reducing fluoride concentration in the cell, thus reducing its toxicity. The polypeptide is Fluoride-specific ion channel FluC (Methylobacterium radiotolerans (strain ATCC 27329 / DSM 1819 / JCM 2831 / NBRC 15690 / NCIMB 10815 / 0-1)).